Here is a 523-residue protein sequence, read N- to C-terminus: Calcium-dependent protein kinase 1 (523 aa).

The interval 1–36 (MGCNQSKSANDVRGNKVNHVNSKKKNNKREDTNDGE) is disordered. G2 carries the N-myristoyl glycine lipid modification. Residue C3 is the site of S-palmitoyl cysteine attachment. Positions 57–324 (YFKVRKLGSG…AEEALNSRWI (268 aa)) constitute a Protein kinase domain. ATP-binding positions include 63–71 (LGSGAYGEV), K86, and K90. S65 carries the post-translational modification Phosphoserine. Position 117 is a phosphoserine (S117). D190 (proton acceptor) is an active-site residue. Phosphoserine occurs at positions 216 and 219. Position 230 is a phosphothreonine (T230). S334 carries the post-translational modification Phosphoserine. Residues 345-352 (NMRKFEGS) carry the J domain autoinhibitory motif motif. The j domain stretch occupies residues 345–363 (NMRKFEGSQKLAQAAILFI). Positions 353 to 363 (QKLAQAAILFI) match the J domain interacts with the EF-hand domains motif. EF-hand domains lie at 371 to 406 (EERKELTDIFKKLDKNGDGQLDKKELIEGYNVLRNF), 415 to 450 (NVEEEVDNILKEVDFDKNGYIEYSEFISVCMDKQIL), 451 to 486 (FSEERLRRAFNLFDTDKSGKITKEELANLFGLTSIS), and 487 to 520 (EKTWNDVLGEADQNKDNMIDFDEFVSMMHKICDH). Ca(2+)-binding residues include D384, N386, D388, Q390, E395, D428, D430, N432, Y434, E439, D464, D466, S468, K470, E475, D498, N500, D502, M504, and E509.

The protein belongs to the protein kinase superfamily. Ser/Thr protein kinase family. CDPK subfamily. As to quaternary structure, monomer. Mg(2+) serves as cofactor. In terms of processing, myristoylated. Myristoylation and palmitoylation are required for the localization to the parasitophorous vacuole membrane. Palmitoylated. Palmitoylation increases in merozoites in response to low level of extracellular K(+) in the host blood. Myristoylation and palmitoylation are required for the localization to the parasitophorous vacuole membrane. Post-translationally, phosphorylation at Thr-230 may regulate CDPK1 kinase activity. Phosphorylation increases in response to an increase in intracellular Ca(2+) levels. Autophosphorylated in vitro. Autophosphorylation does not affect membrane localization in vitro.

It localises to the membrane. The protein localises to the cell membrane. It is found in the parasitophorous vacuole membrane. The protein resides in the cytoplasm. Its subcellular location is the cell projection. It localises to the cilium. The protein localises to the flagellum. It is found in the host cell membrane. It catalyses the reaction L-seryl-[protein] + ATP = O-phospho-L-seryl-[protein] + ADP + H(+). The enzyme catalyses L-threonyl-[protein] + ATP = O-phospho-L-threonyl-[protein] + ADP + H(+). Activated by calcium. Upon calcium binding to the EF-hand domains, the C-terminus of the junction domain (J domain) undergoes a conformational change which results in the dissociation of the pseudo-substrate inhibitory motif from the catalytic domain. This, in turn may facilitate the autophosphorylation of the activation loop at Thr-230, which leads to the kinase activation. In terms of biological role, calcium-dependent protein kinase which acts as a sensor and effector of intracellular Ca(2+) levels probably in part downstream of cGMP-activated PKG kinase. During the liver stage, involved in sporozoite motility and thus in sporozoite invasion of host hepatocytes, probably together with CDPK4 and CDPK5. In the mosquito midgut and during the last stage of male gamete exflagellation, may play a role in the rupture of the host erythrocyte membrane. In the mosquito midgut, required for the differentiation of the zygote into the ookinete by promoting the translational activation of a subset of repressed mRNAs; these mRNAs are kept repressed in the zygote by the DOZI- or CITH-containing mRNP complexes. Dispensable during the asexual blood stage. This is Calcium-dependent protein kinase 1 from Plasmodium berghei (strain Anka).